The following is a 201-amino-acid chain: CDP-diacylglycerol--serine O-phosphatidyltransferase (201 aa).

The next 6 membrane-spanning stretches (helical) occupy residues 19 to 39 (IITG…LSII), 57 to 77 (FGAE…PAYL), 88 to 108 (LISA…FGIL), 112 to 132 (GFIG…CQLI), 133 to 153 (NSYL…ISDI), and 162 to 182 (IFIY…PHFA).

It belongs to the CDP-alcohol phosphatidyltransferase class-I family.

Its subcellular location is the cell membrane. It carries out the reaction a CDP-1,2-diacyl-sn-glycerol + L-serine = a 1,2-diacyl-sn-glycero-3-phospho-L-serine + CMP + H(+). In Methanocaldococcus jannaschii (strain ATCC 43067 / DSM 2661 / JAL-1 / JCM 10045 / NBRC 100440) (Methanococcus jannaschii), this protein is CDP-diacylglycerol--serine O-phosphatidyltransferase (pssA).